Here is a 34-residue protein sequence, read N- to C-terminus: Kappa-theraphotoxin-Scg1a (34 aa).

Disulfide bonds link Cys-2-Cys-16, Cys-9-Cys-21, and Cys-15-Cys-28. The involved in active face stretch occupies residues 4-6 (YLF).

The protein belongs to the neurotoxin 10 (Hwtx-1) family. 09 (HaTx) subfamily. In terms of tissue distribution, expressed by the venom gland.

It is found in the secreted. Its function is as follows. Reversibly inhibits potassium currents in oocytes expressing Kv2.1/KCNB1 channels (Kd=2.7 uM). Acts by shifting activation of the channel to more depolarized voltages. The toxin may bind to the S3b-S4 helices of the voltage sensor paddle. One, two, three or four toxin molecules may bind the Kv2.1/KCNB1 channel. It shows low to moderate affinity for lipid bilayers. It partitions into the bilayer membrane, where it stabilizes at the water/membrane interface. The protein is Kappa-theraphotoxin-Scg1a of Stromatopelma calceatum griseipes (Feather leg baboon tarantula).